Here is a 142-residue protein sequence, read N- to C-terminus: Phenylalanine ammonia-lyase (142 aa).

(E)-cinnamate contacts are provided by Lys66, Glu94, and Asn97.

The protein belongs to the PAL/histidase family. In terms of assembly, homotetramer. In terms of processing, contains an active site 4-methylidene-imidazol-5-one (MIO), which is formed autocatalytically by cyclization and dehydration of residues Ala-Ser-Gly.

The protein localises to the cytoplasm. It carries out the reaction L-phenylalanine = (E)-cinnamate + NH4(+). It functions in the pathway phenylpropanoid metabolism; trans-cinnamate biosynthesis; trans-cinnamate from L-phenylalanine: step 1/1. Catalyzes the non-oxidative deamination of L-phenylalanine to form trans-cinnamic acid and a free ammonium ion. Facilitates the commitment step in phenylpropanoid pathways that produce secondary metabolites such as lignins, coumarins and flavonoids. This chain is Phenylalanine ammonia-lyase (palA), found in Agaricus bisporus (White button mushroom).